Consider the following 348-residue polypeptide: PDZ and LIM domain protein 2 (348 aa).

The region spanning 1–84 is the PDZ domain; sequence MALTVDVVGP…PLRLQLDRPQ (84 aa). The interval 67 to 139 is disordered; that stretch reads SKIRQSPSPL…PPTSPQAPTG (73 aa). A compositionally biased stretch (polar residues) spans 103–118; that stretch reads RFQSSRRTHTDSQASL. A phosphoserine mark is found at Ser117, Ser119, and Ser124. Thr128 and Thr132 each carry phosphothreonine. Ser133, Ser153, Ser191, Ser197, Ser198, Ser202, Ser209, and Ser262 each carry phosphoserine. The tract at residues 165–202 is disordered; sequence GGRRGSRQASLSPAGDSAVLVLPPPPSPGARSSSSRLS. Residues 193-202 show a composition bias toward low complexity; that stretch reads GARSSSSRLS. The tract at residues 249 to 275 is disordered; sequence ERGGTPAYLPSSLSPQSSLPTSRALAS. Low complexity predominate over residues 257 to 270; it reads LPSSLSPQSSLPTS. Positions 280–340 constitute an LIM zinc-binding domain; the sequence is HTCEKCNTSI…EKHARQRYSA (61 aa).

As to quaternary structure, interacts with alpha-actinins ACTN1 and ACTN4, FLNA and MYH9. Interacts (via LIM zinc-binding domain) with MKRN2.

The protein resides in the cytoplasm. Its subcellular location is the cytoskeleton. Probable adapter protein located at the actin cytoskeleton that promotes cell attachment. Necessary for the migratory capacity of epithelial cells. Overexpression enhances cell adhesion to collagen and fibronectin and suppresses anchorage independent growth. May contribute to tumor cell migratory capacity. The polypeptide is PDZ and LIM domain protein 2 (PDLIM2) (Bos taurus (Bovine)).